Here is a 181-residue protein sequence, read N- to C-terminus: Large ribosomal subunit protein uL6 (181 aa).

This sequence belongs to the universal ribosomal protein uL6 family. In terms of assembly, part of the 50S ribosomal subunit.

In terms of biological role, this protein binds to the 23S rRNA, and is important in its secondary structure. It is located near the subunit interface in the base of the L7/L12 stalk, and near the tRNA binding site of the peptidyltransferase center. The protein is Large ribosomal subunit protein uL6 of Lawsonia intracellularis (strain PHE/MN1-00).